Reading from the N-terminus, the 733-residue chain is Oligopeptide transporter 8 (733 aa).

Transmembrane regions (helical) follow at residues 42–62, 66–86, 115–135, 147–167, 209–229, 244–264, 281–301, 357–377, 413–433, 442–462, 531–551, 596–616, 644–664, and 677–697; these read MWVLGITACVLLSFLNQFFWY, PLTISSVSAQIAVVPIGHLMA, VLITVFANSGSGAVYATHILS, FLPALLVMITTQVLGFGWAGL, FFVITLITSFSYYLLPGYLFT, SILVNQLGSGSAGLGIGSFGL, FFASANIAAGFFLVMYVITPL, FAVTYGLGFATLSASIFHVLI, LWWFLSIFAVNLAVIVFICIY, WWGAFLACLIAIFFTPLVGVI, VGTLVAVIAYAGTAWWLMAEI, YSNINWFFVGGAIAPALVYLA, ASAVNFTSWLVMAFVFGHFVF, and VLSGGMDAGTGFMSVLLFLAL.

This sequence belongs to the oligopeptide OPT transporter (TC 2.A.67.1) family.

The protein localises to the membrane. Functionally, may be involved in the translocation of tetra- and pentapeptides across the cellular membrane in an energy-dependent manner. The chain is Oligopeptide transporter 8 (OPT8) from Arabidopsis thaliana (Mouse-ear cress).